The following is a 94-amino-acid chain: Em protein CS41 (94 aa).

3 stretches are compositionally biased toward basic and acidic residues: residues 1–16, 33–53, and 74–94; these read MASG…DSLA, EAQE…KEQM, and GGER…KTKS. The tract at residues 1–94 is disordered; the sequence is MASGQEKGRS…IDESKFKTKS (94 aa).

It belongs to the small hydrophilic plant seed protein family.

Its function is as follows. It is thought to provide protection for the cytoplasm during the desiccation stage of embryo development. This is Em protein CS41 (EM) from Triticum aestivum (Wheat).